A 257-amino-acid polypeptide reads, in one-letter code: Chlorocatechol 1,2-dioxygenase (257 aa).

Fe cation contacts are provided by Tyr-134, Tyr-169, His-194, and His-196.

This sequence belongs to the intradiol ring-cleavage dioxygenase family. It depends on Fe(3+) as a cofactor.

It carries out the reaction 4-chlorocatechol + O2 = 3-chloro-cis,cis-muconate + 2 H(+). It catalyses the reaction 3,5-dichlorocatechol + O2 = (2E,4E)-2,4-dichloromuconate + 2 H(+). The protein is Chlorocatechol 1,2-dioxygenase (clcA) of Rhodococcus opacus (Nocardia opaca).